A 277-amino-acid chain; its full sequence is Endochitinase CHI (277 aa).

An N-terminal signal peptide occupies residues 1 to 31 (MAKPTSRNDRFALFFITLIFLILTVSKPVAS). A Chitin-binding type-1 domain is found at 32–66 (QNCGCASDFCCSKYGYCGTTDEFCGEGCQAGPCRS). 4 disulfide bridges follow: Cys34–Cys42, Cys36–Cys48, Cys41–Cys55, and Cys59–Cys64. The tract at residues 75-277 (VSLEGTVTPD…GVAPGDNLTC (203 aa)) is catalytic. Glu136 acts as the Proton donor in catalysis. N-linked (GlcNAc...) asparagine glycosylation is present at Asn274.

Belongs to the glycosyl hydrolase 19 family. Chitinase class I subfamily.

The enzyme catalyses Random endo-hydrolysis of N-acetyl-beta-D-glucosaminide (1-&gt;4)-beta-linkages in chitin and chitodextrins.. This chain is Endochitinase CHI, found in Arabidopsis thaliana (Mouse-ear cress).